We begin with the raw amino-acid sequence, 400 residues long: Protein screw (400 aa).

The first 16 residues, 1 to 16 (MLNVFFLTSLFYAASA), serve as a signal peptide directing secretion. A propeptide spanning residues 17–277 (TTYVTTNNHI…RFKRDLEKRR (261 aa)) is cleaved from the precursor. N-linked (GlcNAc...) asparagine glycosylation is found at Asn-165, Asn-189, Asn-201, Asn-304, and Asn-342. 3 disulfides stabilise this stretch: Cys-300/Cys-365, Cys-329/Cys-397, and Cys-333/Cys-399.

This sequence belongs to the TGF-beta family. As to quaternary structure, heterodimers of scw/dpp are the active subunit, dpp/dpp homodimers elicit a basal response and scw/scw homodimers alone are ineffective in specifying a dorsal pattern. As to expression, ubiquitously expressed during early stages of embryogenesis, but the effect on development appears graded and is restricted to the dorsal side of the embryo.

The protein localises to the secreted. Its function is as follows. Part of the signal that specifies dorsal cell fates in the embryo. Acts together with dpp. The polypeptide is Protein screw (scw) (Drosophila melanogaster (Fruit fly)).